Reading from the N-terminus, the 122-residue chain is Large ribosomal subunit protein uL24 (122 aa).

Belongs to the universal ribosomal protein uL24 family. Part of the 50S ribosomal subunit.

In terms of biological role, one of two assembly initiator proteins, it binds directly to the 5'-end of the 23S rRNA, where it nucleates assembly of the 50S subunit. One of the proteins that surrounds the polypeptide exit tunnel on the outside of the subunit. The sequence is that of Large ribosomal subunit protein uL24 from Trichodesmium erythraeum (strain IMS101).